A 171-amino-acid polypeptide reads, in one-letter code: UPF0312 protein SAR2769 (171 aa).

The protein belongs to the UPF0312 family.

The chain is UPF0312 protein SAR2769 from Staphylococcus aureus (strain MRSA252).